The primary structure comprises 805 residues: Muscarinic acetylcholine receptor DM1 (805 aa).

Over 1-100 (MEPVMSLALA…GFETKGPRYS (100 aa)) the chain is Extracellular. Low complexity predominate over residues 27–43 (TSTTTTTTTTTSTTTTT). Positions 27 to 47 (TSTTTTTTTTTSTTTTTASPA) are disordered. 3 N-linked (GlcNAc...) asparagine glycosylation sites follow: N65, N84, and N87. The chain crosses the membrane as a helical span at residues 101-121 (LASMVVMGFVAAILSTVTVAG). Topologically, residues 122–141 (NVMVMISFKIDKQLQTISNY) are cytoplasmic. A helical membrane pass occupies residues 142-162 (FLFSLAIADFAIGAISMPLFA). At 163–177 (VTTILGYWPLGPIVC) the chain is on the extracellular side. A helical transmembrane segment spans residues 178–198 (DTWLALDYLASNASVLNLLII). The Cytoplasmic portion of the chain corresponds to 199 to 220 (SFDRYFSVTRPLTYRAKRTTNR). The helical transmembrane segment at 221–241 (AAVMIGAAWGISLLLWPPWIY) threads the bilayer. The Extracellular portion of the chain corresponds to 242–266 (SWPYIEGKRTVPKDECYIQFIETNQ). A helical transmembrane segment spans residues 267-287 (YITFGTALAAFYFPVTIMCFL). The Cytoplasmic portion of the chain corresponds to 288–718 (YWRIWRETKK…KRQESKAAKT (431 aa)). Disordered stretches follow at residues 302-322 (LPNL…SDEN), 340-359 (GNDH…DAES), and 507-530 (GNGN…VNGN). 2 stretches are compositionally biased toward basic and acidic residues: residues 308–318 (GKKDSSKRSNS) and 341–353 (NDHD…RSES). The segment covering 507–525 (GNGNGAINNNNNASHNGNG) has biased composition (low complexity). The helical transmembrane segment at 719–739 (LSAILLSFIITWTPYNILVLI) threads the bilayer. Topologically, residues 740-752 (KPLTTCSDCIPTE) are extracellular. The chain crosses the membrane as a helical span at residues 753-773 (LWDFFYALCYINSTINPMCYA). At 774–805 (LCNATFRRTYVRILTCKWHTRNREGMVRGVYN) the chain is on the cytoplasmic side.

This sequence belongs to the G-protein coupled receptor 1 family. Muscarinic acetylcholine receptor subfamily. In terms of tissue distribution, intense staining in the glomeruli of the antennal lobes, the region of the nervous system containing terminals of antennal olfactory sensory neurons and mechanosensory neurons. Also a discrete group of neurosecretory cells in the pars intercerebralis of the brain.

The protein localises to the cell membrane. The protein resides in the postsynaptic cell membrane. The muscarinic acetylcholine receptor mediates various cellular responses, including inhibition of adenylate cyclase, breakdown of phosphoinositides and modulation of potassium channels through the action of G proteins. Primary transducing effect is Pi turnover. May have a role in the processing of olfactory and mechanosensory signals; regulation of neurosecretion. This is Muscarinic acetylcholine receptor DM1 (mAChR-A) from Drosophila melanogaster (Fruit fly).